The following is a 502-amino-acid chain: Dynein regulatory complex subunit 2 (502 aa).

Coiled-coil stretches lie at residues 96-160 (DSVI…RKAI) and 252-285 (EKSSKEIEVQMKKIQRLQEAISALKGKIVAHSRE).

It belongs to the DRC2 family. In terms of assembly, component of the nexin-dynein regulatory complex (N-DRC). Interacts with DRC1.

It is found in the cytoplasm. The protein localises to the cytoskeleton. Its subcellular location is the flagellum basal body. It localises to the cell projection. The protein resides in the cilium. It is found in the flagellum. The protein localises to the flagellum axoneme. Functionally, component of the nexin-dynein regulatory complex (N-DRC), a key regulator of ciliary/flagellar motility which maintains the alignment and integrity of the distal axoneme and regulates microtubule sliding in motile axonemes. Plays a critical role in the assembly of N-DRC and also stabilizes the assembly of multiple inner dynein arms and radial spokes. Coassembles with DRC1 to form a central scaffold needed for assembly of the N-DRC and its attachment to the outer doublet microtubules. The sequence is that of Dynein regulatory complex subunit 2 (Ccdc65) from Rattus norvegicus (Rat).